The following is a 337-amino-acid chain: Transaldolase (337 aa).

The Nuclear localization signal motif lies at 1 to 10; the sequence is MSGSPVKRQR. The residue at position 115 (Lys-115) is an N6-acetyllysine. Catalysis depends on Lys-142, which acts as the Schiff-base intermediate with substrate. An N6-acetyllysine modification is found at Lys-219. Phosphoserine occurs at positions 237 and 256. Residues Lys-269, Lys-286, and Lys-321 each carry the N6-acetyllysine modification.

It belongs to the transaldolase family. Type 1 subfamily. In terms of assembly, homodimer. Interacts with KPNA1 and KPNA4.

The protein resides in the nucleus. It localises to the cytoplasm. The enzyme catalyses D-sedoheptulose 7-phosphate + D-glyceraldehyde 3-phosphate = D-erythrose 4-phosphate + beta-D-fructose 6-phosphate. Its pathway is carbohydrate degradation; pentose phosphate pathway; D-glyceraldehyde 3-phosphate and beta-D-fructose 6-phosphate from D-ribose 5-phosphate and D-xylulose 5-phosphate (non-oxidative stage): step 2/3. Functionally, catalyzes the rate-limiting step of the non-oxidative phase in the pentose phosphate pathway. Catalyzes the reversible conversion of sedheptulose-7-phosphate and D-glyceraldehyde 3-phosphate into erythrose-4-phosphate and beta-D-fructose 6-phosphate. The protein is Transaldolase (Taldo1) of Rattus norvegicus (Rat).